The chain runs to 940 residues: Vacuolar protein sorting-associated protein 54 (940 aa).

Threonine 30 is modified (phosphothreonine). The disordered stretch occupies residues 192-218 (QQLERDKPLENGAQGAPGPGTGGQTPT). Positions 299 to 325 (HAILAEMEQAADQVRQLRAALAELHSH) form a coiled coil.

The protein belongs to the VPS54 family.

The protein localises to the golgi apparatus. The protein resides in the trans-Golgi network. In terms of biological role, may be involved in retrograde transport from early and late endosomes to late Golgi. Required during spermatogenesis for sperm individualization. The sequence is that of Vacuolar protein sorting-associated protein 54 (scat) from Drosophila melanogaster (Fruit fly).